An 886-amino-acid polypeptide reads, in one-letter code: Alanine--tRNA ligase (886 aa).

Histidine 564, histidine 568, cysteine 666, and histidine 670 together coordinate Zn(2+).

The protein belongs to the class-II aminoacyl-tRNA synthetase family. Zn(2+) is required as a cofactor.

The protein resides in the cytoplasm. The enzyme catalyses tRNA(Ala) + L-alanine + ATP = L-alanyl-tRNA(Ala) + AMP + diphosphate. Its function is as follows. Catalyzes the attachment of alanine to tRNA(Ala) in a two-step reaction: alanine is first activated by ATP to form Ala-AMP and then transferred to the acceptor end of tRNA(Ala). Also edits incorrectly charged Ser-tRNA(Ala) and Gly-tRNA(Ala) via its editing domain. The protein is Alanine--tRNA ligase of Prochlorococcus marinus (strain MIT 9301).